The chain runs to 61 residues: Large ribosomal subunit protein bL32 (61 aa).

It belongs to the bacterial ribosomal protein bL32 family.

This Phytoplasma mali (strain AT) protein is Large ribosomal subunit protein bL32.